The chain runs to 212 residues: Acyl-homoserine-lactone synthase (212 aa).

This sequence belongs to the autoinducer synthase family.

It catalyses the reaction a fatty acyl-[ACP] + S-adenosyl-L-methionine = an N-acyl-L-homoserine lactone + S-methyl-5'-thioadenosine + holo-[ACP] + H(+). Its function is as follows. Required for the synthesis of OHHL (N-(3-oxohexanoyl)-L-homoserine lactone), an autoinducer molecule which binds to the EchR transcriptional regulator. In Dickeya chrysanthemi (Pectobacterium chrysanthemi), this protein is Acyl-homoserine-lactone synthase (echI).